A 439-amino-acid polypeptide reads, in one-letter code: Glutamine synthetase (439 aa).

In terms of domain architecture, GS beta-grasp spans 12 to 93 (RSPKFVQLIF…VYGYIYKDGK (82 aa)). The GS catalytic domain occupies 99 to 439 (PRGVLKRVIE…EWELERYFFI (341 aa)). Residues glutamate 122 and glutamate 124 each coordinate Mg(2+). Position 172 (glutamate 172) interacts with ATP. Residues glutamate 177 and glutamate 184 each contribute to the Mg(2+) site. Glycine 229 is a binding site for L-glutamate. Histidine 233 contacts Mg(2+). ATP is bound by residues 235–237 (HIS) and serine 237. Residues arginine 283, glutamate 289, and arginine 301 each contribute to the L-glutamate site. 2 residues coordinate ATP: arginine 301 and arginine 306. Residue glutamate 318 participates in Mg(2+) binding. Arginine 320 is a binding site for L-glutamate.

It belongs to the glutamine synthetase family. Oligomer of 12 subunits arranged in the form of two hexagons. It depends on Mg(2+) as a cofactor.

It localises to the cytoplasm. The catalysed reaction is L-glutamate + NH4(+) + ATP = L-glutamine + ADP + phosphate + H(+). Functionally, probably involved in nitrogen metabolism via ammonium assimilation. Catalyzes the ATP-dependent biosynthesis of glutamine from glutamate and ammonia. This Pyrococcus abyssi (strain GE5 / Orsay) protein is Glutamine synthetase.